We begin with the raw amino-acid sequence, 229 residues long: 2,3-bisphosphoglycerate-dependent phosphoglycerate mutase (229 aa).

Substrate contacts are provided by residues 7 to 14 (RHGQSEWN), 20 to 21 (TG), R59, 86 to 89 (ERHY), K97, 113 to 114 (RR), and 182 to 183 (GN). The active-site Tele-phosphohistidine intermediate is the H8. E86 serves as the catalytic Proton donor/acceptor.

It belongs to the phosphoglycerate mutase family. BPG-dependent PGAM subfamily.

It carries out the reaction (2R)-2-phosphoglycerate = (2R)-3-phosphoglycerate. Its pathway is carbohydrate degradation; glycolysis; pyruvate from D-glyceraldehyde 3-phosphate: step 3/5. Functionally, catalyzes the interconversion of 2-phosphoglycerate and 3-phosphoglycerate. The chain is 2,3-bisphosphoglycerate-dependent phosphoglycerate mutase from Listeria monocytogenes serovar 1/2a (strain ATCC BAA-679 / EGD-e).